Reading from the N-terminus, the 247-residue chain is Adenosylcobinamide-GDP ribazoletransferase (247 aa).

Helical transmembrane passes span 34 to 54 (IITF…VFMA), 59 to 79 (FGVP…TGGF), 113 to 133 (GGLA…ELAL), 138 to 158 (ILAS…LLMY), and 194 to 214 (VLLP…AIFI).

It belongs to the CobS family. Mg(2+) serves as cofactor.

It localises to the cell inner membrane. The enzyme catalyses alpha-ribazole + adenosylcob(III)inamide-GDP = adenosylcob(III)alamin + GMP + H(+). The catalysed reaction is alpha-ribazole 5'-phosphate + adenosylcob(III)inamide-GDP = adenosylcob(III)alamin 5'-phosphate + GMP + H(+). Its pathway is cofactor biosynthesis; adenosylcobalamin biosynthesis; adenosylcobalamin from cob(II)yrinate a,c-diamide: step 7/7. Its function is as follows. Joins adenosylcobinamide-GDP and alpha-ribazole to generate adenosylcobalamin (Ado-cobalamin). Also synthesizes adenosylcobalamin 5'-phosphate from adenosylcobinamide-GDP and alpha-ribazole 5'-phosphate. In Escherichia coli O17:K52:H18 (strain UMN026 / ExPEC), this protein is Adenosylcobinamide-GDP ribazoletransferase.